Here is a 144-residue protein sequence, read N- to C-terminus: uncharacterized protein (144 aa).

Residues 13–120 form the HIT domain; sequence IFCGIVEGNV…VPKYETGLGF (108 aa). Residues 105–109 carry the Histidine triad motif motif; sequence HYHMH.

This is an uncharacterized protein from Mycoplasma pneumoniae (strain ATCC 29342 / M129 / Subtype 1) (Mycoplasmoides pneumoniae).